Here is a 268-residue protein sequence, read N- to C-terminus: 2,5-diamino-6-ribosylamino-4(3H)-pyrimidinone 5'-phosphate reductase (268 aa).

Residues threonine 68, aspartate 72, 103–106 (SNLR), and 191–195 (GAELL) contribute to the NADP(+) site.

Belongs to the HTP reductase family. In terms of assembly, homodimer.

The catalysed reaction is 2,5-diamino-6-(1-D-ribitylamino)pyrimidin-4(3H)-one 5'-phosphate + NADP(+) = 2,5-diamino-6-(1-D-ribosylamino)pyrimidin-4(3H)-one 5'-phosphate + NADPH + H(+). It catalyses the reaction 2,5-diamino-6-(1-D-ribitylamino)pyrimidin-4(3H)-one 5'-phosphate + NAD(+) = 2,5-diamino-6-(1-D-ribosylamino)pyrimidin-4(3H)-one 5'-phosphate + NADH + H(+). The protein operates within cofactor biosynthesis; riboflavin biosynthesis. Functionally, catalyzes an early step in riboflavin biosynthesis, the NADPH-dependent reduction of the ribose side chain of 2,5-diamino-6-ribosylamino-4(3H)-pyrimidinone 5'-phosphate, yielding 2,5-diamino-6-ribitylamino-4(3H)-pyrimidinone 5'-phosphate. The sequence is that of 2,5-diamino-6-ribosylamino-4(3H)-pyrimidinone 5'-phosphate reductase from Schizosaccharomyces pombe (strain 972 / ATCC 24843) (Fission yeast).